A 261-amino-acid polypeptide reads, in one-letter code: 4-hydroxy-tetrahydrodipicolinate reductase (261 aa).

Residue 9–14 (GCLGRM) participates in NAD(+) binding. Arginine 36 serves as a coordination point for NADP(+). Residues 97–99 (GTT) and 118–121 (SANM) each bind NAD(+). Histidine 151 serves as the catalytic Proton donor/acceptor. (S)-2,3,4,5-tetrahydrodipicolinate is bound at residue histidine 152. Lysine 155 acts as the Proton donor in catalysis. 161 to 162 (GT) serves as a coordination point for (S)-2,3,4,5-tetrahydrodipicolinate.

The protein belongs to the DapB family.

It localises to the cytoplasm. The enzyme catalyses (S)-2,3,4,5-tetrahydrodipicolinate + NAD(+) + H2O = (2S,4S)-4-hydroxy-2,3,4,5-tetrahydrodipicolinate + NADH + H(+). It carries out the reaction (S)-2,3,4,5-tetrahydrodipicolinate + NADP(+) + H2O = (2S,4S)-4-hydroxy-2,3,4,5-tetrahydrodipicolinate + NADPH + H(+). It functions in the pathway amino-acid biosynthesis; L-lysine biosynthesis via DAP pathway; (S)-tetrahydrodipicolinate from L-aspartate: step 4/4. Catalyzes the conversion of 4-hydroxy-tetrahydrodipicolinate (HTPA) to tetrahydrodipicolinate. In Wolbachia pipientis wMel, this protein is 4-hydroxy-tetrahydrodipicolinate reductase.